Consider the following 447-residue polypeptide: UPF0210 protein LSEI_0897 (447 aa).

This sequence belongs to the UPF0210 family. In terms of assembly, homodimer.

This chain is UPF0210 protein LSEI_0897, found in Lacticaseibacillus paracasei (strain ATCC 334 / BCRC 17002 / CCUG 31169 / CIP 107868 / KCTC 3260 / NRRL B-441) (Lactobacillus paracasei).